A 32-amino-acid chain; its full sequence is Kappa-conotoxin SrXIA (32 aa).

Disulfide bonds link C1-C15, C8-C20, C14-C24, and C19-C28. Residues E9 and E10 each carry the 4-carboxyglutamate modification. P32 carries the proline amide modification.

Belongs to the conotoxin I2 superfamily. As to expression, expressed by the venom duct.

The protein resides in the secreted. Functionally, kappa-conotoxins bind and inhibit voltage-gated potassium channels. This toxin inhibits Kv1.2/KCNA2 and Kv1.6/KCNA6. Produces stiffening of body, limbs and tail when injected intracranially into mice. The protein is Kappa-conotoxin SrXIA of Conus spurius (Alphabet cone).